The sequence spans 221 residues: Probable transaldolase (221 aa).

Catalysis depends on K87, which acts as the Schiff-base intermediate with substrate.

Belongs to the transaldolase family. Type 3B subfamily.

It localises to the cytoplasm. The enzyme catalyses D-sedoheptulose 7-phosphate + D-glyceraldehyde 3-phosphate = D-erythrose 4-phosphate + beta-D-fructose 6-phosphate. It functions in the pathway carbohydrate degradation; pentose phosphate pathway; D-glyceraldehyde 3-phosphate and beta-D-fructose 6-phosphate from D-ribose 5-phosphate and D-xylulose 5-phosphate (non-oxidative stage): step 2/3. Its function is as follows. Transaldolase is important for the balance of metabolites in the pentose-phosphate pathway. The sequence is that of Probable transaldolase from Syntrophobacter fumaroxidans (strain DSM 10017 / MPOB).